An 88-amino-acid chain; its full sequence is Apolipoprotein C-I (88 aa).

The signal sequence occupies residues Met1–Ala26.

It belongs to the apolipoprotein C1 family.

Its subcellular location is the secreted. Inhibitor of lipoprotein binding to the low density lipoprotein (LDL) receptor, LDL receptor-related protein, and very low density lipoprotein (VLDL) receptor. Associates with high density lipoproteins (HDL) and the triacylglycerol-rich lipoproteins in the plasma and makes up about 10% of the protein of the VLDL and 2% of that of HDL. Appears to interfere directly with fatty acid uptake and is also the major plasma inhibitor of cholesteryl ester transfer protein (CETP). Binds free fatty acids and reduces their intracellular esterification. Modulates the interaction of APOE with beta-migrating VLDL and inhibits binding of beta-VLDL to the LDL receptor-related protein. This is Apolipoprotein C-I (APOC1) from Mirounga angustirostris (Northern elephant seal).